We begin with the raw amino-acid sequence, 180 residues long: UPF0340 protein LACR_0494 (180 aa).

Belongs to the UPF0340 family.

The chain is UPF0340 protein LACR_0494 from Lactococcus lactis subsp. cremoris (strain SK11).